Consider the following 443-residue polypeptide: Transcription factor E2F2 (443 aa).

A disordered region spans residues Met-1 to Leu-22. The interval Ala-67–Pro-107 is cyclin A/CDK2 binding. Residues Gly-109–Glu-198 mediate DNA binding. The interval Leu-157–Leu-178 is leucine-zipper. The DEF box signature appears at Glu-162–Glu-198. The dimerization stretch occupies residues Leu-199–Ile-291. A disordered region spans residues Pro-306–Ser-341. The transactivation stretch occupies residues Pro-361–Asn-443. Residues Asp-416–Asp-433 are retinoblastoma protein binding.

It belongs to the E2F/DP family. In terms of assembly, component of the DRTF1/E2F transcription factor complex. Forms heterodimers with DP family members. The E2F2 complex binds specifically hypophosphorylated retinoblastoma protein RB1. During the cell cycle, RB1 becomes phosphorylated in mid-to-late G1 phase, detaches from the DRTF1/E2F complex, rendering E2F transcriptionally active. Viral oncoproteins, notably E1A, T-antigen and HPV E7, are capable of sequestering RB protein, thus releasing the active complex. Binds EAPP. In terms of processing, phosphorylated by CDK2 and cyclin A-CDK2 in the S-phase.

It is found in the nucleus. Its function is as follows. Transcription activator that binds DNA cooperatively with DP proteins through the E2 recognition site, 5'-TTTC[CG]CGC-3' found in the promoter region of a number of genes whose products are involved in cell cycle regulation or in DNA replication. The DRTF1/E2F complex functions in the control of cell-cycle progression from g1 to s phase. E2F2 binds specifically to RB1 in a cell-cycle dependent manner. The polypeptide is Transcription factor E2F2 (E2f2) (Mus musculus (Mouse)).